A 349-amino-acid chain; its full sequence is Phenylalanine--tRNA ligase alpha subunit (349 aa).

Glutamate 264 lines the Mg(2+) pocket.

This sequence belongs to the class-II aminoacyl-tRNA synthetase family. Phe-tRNA synthetase alpha subunit type 1 subfamily. In terms of assembly, tetramer of two alpha and two beta subunits. Mg(2+) is required as a cofactor.

It is found in the cytoplasm. The catalysed reaction is tRNA(Phe) + L-phenylalanine + ATP = L-phenylalanyl-tRNA(Phe) + AMP + diphosphate + H(+). This Myxococcus xanthus (strain DK1622) protein is Phenylalanine--tRNA ligase alpha subunit.